We begin with the raw amino-acid sequence, 53 residues long: Metallothionein (53 aa).

It belongs to the metallothionein superfamily. Type 14 family.

This protein complexes cadmium, zinc and copper. The chain is Metallothionein from Synechococcus sp.